The sequence spans 211 residues: Small ribosomal subunit protein eS1 (211 aa).

This sequence belongs to the eukaryotic ribosomal protein eS1 family.

The sequence is that of Small ribosomal subunit protein eS1 from Methanothrix thermoacetophila (strain DSM 6194 / JCM 14653 / NBRC 101360 / PT) (Methanosaeta thermophila).